The sequence spans 831 residues: Histone acetyltransferase SAS3 (831 aa).

Residues 267 to 573 enclose the MYST-type HAT domain; it reads VWFSQIEYIV…VKYDKLLWEP (307 aa). The C2HC MYST-type zinc-finger motif lies at 300-325; the sequence is VFICEFCLKYMTSRYTFYRHQLKCLT. The residue at position 367 (K367) is an N6-acetyllysine; by autocatalysis. Acetyl-CoA-binding positions include 419–421 and 426–432; these read ILT and QRKGYGQ. Catalysis depends on E452, which acts as the Proton donor/acceptor. S456 lines the acetyl-CoA pocket. Disordered regions lie at residues 614 to 639 and 719 to 813; these read ENYN…KTSK and PLGN…SHIR. The span at 621–633 shows a compositional bias: basic residues; that stretch reads AHNKRRRRRRRSS. 2 stretches are compositionally biased toward acidic residues: residues 736-746 and 755-794; these read EQDEVENDVDT and KEDE…DDDE. Over residues 795–812 the composition is skewed to basic and acidic residues; sequence DGKRKGQEQDENDIESHI.

This sequence belongs to the MYST (SAS/MOZ) family. As to quaternary structure, component of the NuA3 histone acetyltransferase (HAT) complex. The NuA3 HAT complex has 2 functionally distinct forms that participate in transcription. The NuA3a HAT complex is composed of at least NTO1, SAS3, TAF14, YNG1 and EAF6. The NuA3b HAT complex contains an additional subunit, PDP3. SAS3 interacts with CDC68/SPT16. Autoacetylation at Lys-367 is required for proper function.

The protein resides in the nucleus. It catalyses the reaction L-lysyl-[protein] + acetyl-CoA = N(6)-acetyl-L-lysyl-[protein] + CoA + H(+). Catalytic component of the NuA3 histone acetyltransferase complex, that acetylates H3K14. The NuA3 HAT complex has 2 functionally distinct forms. NuA3a binds H3K4me3, through the PHD finger of YNG1, and acetylates H3K14 at the promoter region of actively transcribed genes to promote transcription initiation. NuA3b binds H3K36me3 at the coding regions of actively transcribed genes, through the PWWP domain of PDP3, and coordinates transcription elongation. In vitro, SAS3 acetylates free histones H3 and H4. It is involved in silencing the HMR locus. The protein is Histone acetyltransferase SAS3 of Saccharomyces cerevisiae (strain ATCC 204508 / S288c) (Baker's yeast).